Reading from the N-terminus, the 258-residue chain is UPF0246 protein YaaA (258 aa).

Belongs to the UPF0246 family.

The chain is UPF0246 protein YaaA from Escherichia coli O127:H6 (strain E2348/69 / EPEC).